Consider the following 340-residue polypeptide: Mitochondrial carrier protein CoAc1 (340 aa).

The next 6 helical transmembrane spans lie at 22–42 (ALDL…AGAF), 85–105 (FYKG…LHYM), 130–147 (LLAG…TYPL), 199–219 (GVGP…YIYE), 237–257 (LSCG…LDVV), and 297–317 (FAGL…GFTT). Solcar repeat units lie at residues 27–113 (PVYA…YRCW), 124–224 (TGPV…LKSQ), and 231–324 (DSVI…MKAL).

It belongs to the mitochondrial carrier (TC 2.A.29) family. Expressed throughout the plant.

It is found in the mitochondrion inner membrane. Its function is as follows. Required for the accumulation of coenzyme A in the mitochondrial matrix. The sequence is that of Mitochondrial carrier protein CoAc1 from Zea mays (Maize).